The chain runs to 138 residues: uncharacterized protein (138 aa).

It localises to the plastid. The protein resides in the chloroplast. This is an uncharacterized protein from Chlorella vulgaris (Green alga).